Reading from the N-terminus, the 354-residue chain is MAIDENKQKALAAALGQIEKQFGKGSIMRLGEDRSMDVETISTGSLSLDIALGAGGLPMGRIVEIYGPESSGKTTLTLQVIAAAQREGKTCAFIDAEHALDPIYAKKLGVDIDNLLCSQPDTGEQALEICDALTRSGAVDVIIVDSVAALTPKAEIEGEIGDSHMGLAARMMSQAMRKLAGNLKNANTLLIFINQIRMKIGVMFGNPETTTGGNALKFYASVRLDIRRIGAVKEGDVVVGSETRVKVVKNKIAAPFKQAEFQILYGEGININGELVDLGVKHKLIEKAGAWYSYNGDKIGQGKANASNYLKENPAVAAELDKKLREMLLNGGNGEQPVATAAFADEADETSEEF.

67 to 74 (GPESSGKT) provides a ligand contact to ATP.

This sequence belongs to the RecA family.

The protein localises to the cytoplasm. In terms of biological role, can catalyze the hydrolysis of ATP in the presence of single-stranded DNA, the ATP-dependent uptake of single-stranded DNA by duplex DNA, and the ATP-dependent hybridization of homologous single-stranded DNAs. It interacts with LexA causing its activation and leading to its autocatalytic cleavage. This is Protein RecA from Yersinia enterocolitica serotype O:8 / biotype 1B (strain NCTC 13174 / 8081).